A 598-amino-acid polypeptide reads, in one-letter code: Torsin-1A-interacting protein 1 (598 aa).

Over 1 to 351 the chain is Nuclear; it reads MAGEGRRAEA…PQNASFVKRN (351 aa). Disordered stretches follow at residues 19–254 and 267–314; these read VTPR…RSSS and QNFT…IYGS. Phosphoserine is present on serine 60. Basic and acidic residues-rich tracts occupy residues 73-101 and 115-124; these read LVDK…EVRE and RPQEAEEMKT. Serine 135, serine 143, serine 154, serine 156, serine 157, and serine 187 each carry phosphoserine. Residues 205-214 show a composition bias toward polar residues; it reads EATSVQQKVN. Serine 216 carries the phosphoserine modification. Threonine 221 bears the Phosphothreonine mark. Residues serine 227, serine 230, and serine 242 each carry the phosphoserine modification. Basic and acidic residues predominate over residues 238–250; sequence RSRDSDESGDKTT. Composition is skewed to polar residues over residues 277–287 and 300–313; these read SVLSSGYQKTP and RMQT…SIYG. Residue serine 320 is modified to Phosphoserine. Residues 322–341 form a disordered region; sequence LKSELGNQSPSTSSQQVTGQ. Lysine 323 is covalently cross-linked (Glycyl lysine isopeptide (Lys-Gly) (interchain with G-Cter in SUMO2)). The segment covering 326–341 has biased composition (polar residues); that stretch reads LGNQSPSTSSQQVTGQ. Serine 330 is subject to Phosphoserine. Residues 352–372 traverse the membrane as a helical segment; the sequence is WWWLLPLIAALASGSFWFFST. Positions 371-598 are interaction with TOR1A; it reads STPEVETTAV…ENALKRGICL (228 aa). Residues 373–598 are Perinuclear space-facing; sequence PEVETTAVQE…ENALKRGICL (226 aa). Residues 374 to 450 are a coiled coil; it reads EVETTAVQEF…SEQIADAYSS (77 aa). Asparagine 414 carries N-linked (GlcNAc...) asparagine glycosylation.

This sequence belongs to the TOR1AIP family. In terms of assembly, interacts with ATP1B4. Interacts with TOR1A (ATP-bound). Interacts with TOR1B, TOR2A and TOR3A.

The protein localises to the nucleus inner membrane. Its function is as follows. Required for nuclear membrane integrity. Induces TOR1A and TOR1B ATPase activity and is required for their location on the nuclear membrane. Binds to A- and B-type lamins. Possible role in membrane attachment and assembly of the nuclear lamina. This Pongo abelii (Sumatran orangutan) protein is Torsin-1A-interacting protein 1 (TOR1AIP1).